Reading from the N-terminus, the 710-residue chain is E3 ubiquitin-protein ligase TRIM9 (710 aa).

The RING-type zinc-finger motif lies at 10–50 (CPVCGSFYREPIILPCSHNICQACARNILVQTPESESPQSR). Phosphothreonine is present on Thr41. Ser44, Ser46, Ser49, and Ser53 each carry phosphoserine. B box-type zinc fingers lie at residues 163–212 (AAAL…LVPP) and 224–266 (RKVS…VKAL). Zn(2+)-binding residues include Cys168, Cys171, Cys193, His198, Cys229, His232, Cys252, and His258. Residues 273 to 340 (HKSQLSQALN…KAQLLARVNK (68 aa)) adopt a coiled-coil conformation. Residues 374 to 432 (IKENDPSGFLQISDALIRRVHLTEDQWGKGTLTPRMTTDFDLSLDNSPLLQSIHQLDFV) enclose the COS domain. One can recognise a Fibronectin type-III domain in the interval 440–535 (VPATPILQLE…KTLVLQTSEV (96 aa)). Residues 533-702 (SEVAWFAFDP…LHTGLQVPDF (170 aa)) enclose the B30.2/SPRY domain.

The protein belongs to the TRIM/RBCC family. Interacts with SNAP25. Auto-ubiquitinated.

The protein resides in the cytoplasm. The protein localises to the cell projection. It is found in the dendrite. It localises to the cytoplasmic vesicle. Its subcellular location is the secretory vesicle. The protein resides in the synaptic vesicle. The protein localises to the synapse. It is found in the cytoskeleton. It catalyses the reaction S-ubiquitinyl-[E2 ubiquitin-conjugating enzyme]-L-cysteine + [acceptor protein]-L-lysine = [E2 ubiquitin-conjugating enzyme]-L-cysteine + N(6)-ubiquitinyl-[acceptor protein]-L-lysine.. The protein operates within protein modification; protein ubiquitination. E3 ubiquitin-protein ligase which ubiquitinates itself in cooperation with an E2 enzyme UBE2D2/UBC4 and serves as a targeting signal for proteasomal degradation. May play a role in regulation of neuronal functions. May act as a regulator of synaptic vesicle exocytosis by controlling the availability of SNAP25 for the SNARE complex formation. This is E3 ubiquitin-protein ligase TRIM9 (TRIM9) from Bos taurus (Bovine).